Here is a 135-residue protein sequence, read N- to C-terminus: Cytochrome b-c1 complex subunit 6, mitochondrial (135 aa).

The tract at residues 1 to 70 (MSFFRDLLES…ETADPLDTLR (70 aa)) is disordered. Residues 19-64 (EPVEDVEVEQPEDAPEEEVSEETVEEEEDDDEDDDEDDEEEEETAD) are compositionally biased toward acidic residues.

The protein belongs to the UQCRH/QCR6 family. As to quaternary structure, component of the ubiquinol-cytochrome c oxidoreductase (cytochrome b-c1 complex, complex III, CIII), a multisubunit enzyme composed of 10 subunits. The complex is composed of 3 respiratory subunits cytochrome b (COB), cytochrome c1 (CYT1) and Rieske protein (RIP1), 2 core protein subunits COR1 and QCR2, and 5 low-molecular weight protein subunits QCR6, QCR7, QCR8, QCR9 and QCR10. The complex exists as an obligatory dimer and forms supercomplexes (SCs) in the inner mitochondrial membrane with a monomer or a dimer of cytochrome c oxidase (complex IV, CIV), resulting in 2 different assemblies (supercomplexes III(2)IV and III(2)IV(2)).

It localises to the mitochondrion inner membrane. Component of the ubiquinol-cytochrome c oxidoreductase, a multisubunit transmembrane complex that is part of the mitochondrial electron transport chain which drives oxidative phosphorylation. The complex plays an important role in the uptake of multiple carbon sources present in different host niches. In Candida albicans (strain SC5314 / ATCC MYA-2876) (Yeast), this protein is Cytochrome b-c1 complex subunit 6, mitochondrial.